Consider the following 222-residue polypeptide: Ribosomal RNA small subunit methyltransferase G (222 aa).

G80, L85, and R149 together coordinate S-adenosyl-L-methionine.

Belongs to the methyltransferase superfamily. RNA methyltransferase RsmG family.

Its subcellular location is the cytoplasm. Specifically methylates the N7 position of a guanine in 16S rRNA. This is Ribosomal RNA small subunit methyltransferase G from Treponema pallidum (strain Nichols).